A 113-amino-acid polypeptide reads, in one-letter code: MHEMSLCEGILQILEEEARRQMFSRVRTVRLEVGELAGVELDAMYFGFDVVCRDTLADGARLEIVQRPGQAFCLGCGERVAVRRRFDACPDCGSYQLQVIGGDELRIKDLEVD.

His-2 contributes to the Ni(2+) binding site. Residues Cys-73, Cys-76, Cys-89, and Cys-92 each contribute to the Zn(2+) site.

It belongs to the HypA/HybF family.

Its function is as follows. Involved in the maturation of [NiFe] hydrogenases. Required for nickel insertion into the metal center of the hydrogenase. In Alkalilimnicola ehrlichii (strain ATCC BAA-1101 / DSM 17681 / MLHE-1), this protein is Hydrogenase maturation factor HypA.